The following is an 80-amino-acid chain: ATP synthase subunit c (80 aa).

2 helical membrane passes run 8-28 (MIYFAAAIMLGMAAVGAAIGI) and 55-75 (IVMGLVDAIPMIVVGMALYLI).

This sequence belongs to the ATPase C chain family. In terms of assembly, F-type ATPases have 2 components, F(1) - the catalytic core - and F(0) - the membrane proton channel. F(1) has five subunits: alpha(3), beta(3), gamma(1), delta(1), epsilon(1). F(0) has three main subunits: a(1), b(2) and c(10-14). The alpha and beta chains form an alternating ring which encloses part of the gamma chain. F(1) is attached to F(0) by a central stalk formed by the gamma and epsilon chains, while a peripheral stalk is formed by the delta and b chains.

The protein localises to the cell inner membrane. F(1)F(0) ATP synthase produces ATP from ADP in the presence of a proton or sodium gradient. F-type ATPases consist of two structural domains, F(1) containing the extramembraneous catalytic core and F(0) containing the membrane proton channel, linked together by a central stalk and a peripheral stalk. During catalysis, ATP synthesis in the catalytic domain of F(1) is coupled via a rotary mechanism of the central stalk subunits to proton translocation. In terms of biological role, key component of the F(0) channel; it plays a direct role in translocation across the membrane. A homomeric c-ring of between 10-14 subunits forms the central stalk rotor element with the F(1) delta and epsilon subunits. This chain is ATP synthase subunit c, found in Aeromonas salmonicida (strain A449).